The following is a 521-amino-acid chain: NAD(P)H-quinone oxidoreductase subunit 2 (521 aa).

Transmembrane regions (helical) follow at residues 14 to 34 (VILP…TDLI), 42 to 62 (LTPA…TLQW), 79 to 99 (LSIV…LLSI), 109 to 129 (LGEF…LSGA), 132 to 152 (LVTI…LTGY), 167 to 187 (LLIG…LYGL), 207 to 227 (LALL…ISAV), 241 to 261 (PTPI…ALAI), 275 to 295 (WHFV…VVAL), 303 to 323 (LLAY…IAGT), 331 to 351 (VYYL…VILF), 375 to 395 (LGLS…GFFG), 397 to 417 (LYLF…LALI), and 463 to 483 (AGLV…NPLF).

It belongs to the complex I subunit 2 family. As to quaternary structure, NDH-1 can be composed of about 15 different subunits; different subcomplexes with different compositions have been identified which probably have different functions.

The protein localises to the cellular thylakoid membrane. It carries out the reaction a plastoquinone + NADH + (n+1) H(+)(in) = a plastoquinol + NAD(+) + n H(+)(out). It catalyses the reaction a plastoquinone + NADPH + (n+1) H(+)(in) = a plastoquinol + NADP(+) + n H(+)(out). Its function is as follows. NDH-1 shuttles electrons from an unknown electron donor, via FMN and iron-sulfur (Fe-S) centers, to quinones in the respiratory and/or the photosynthetic chain. The immediate electron acceptor for the enzyme in this species is believed to be plastoquinone. Couples the redox reaction to proton translocation, and thus conserves the redox energy in a proton gradient. Cyanobacterial NDH-1 also plays a role in inorganic carbon-concentration. This chain is NAD(P)H-quinone oxidoreductase subunit 2, found in Synechococcus elongatus (strain ATCC 33912 / PCC 7942 / FACHB-805) (Anacystis nidulans R2).